A 214-amino-acid chain; its full sequence is tRNA (guanine-N(7)-)-methyltransferase (214 aa).

The S-adenosyl-L-methionine site is built by E44, D69, D96, and D118. Residue D118 is part of the active site. K122 is a binding site for substrate. Positions 124–129 (KHEKRR) are interaction with RNA. Residues D154 and 191 to 194 (TEYE) each bind substrate.

It belongs to the class I-like SAM-binding methyltransferase superfamily. TrmB family.

It catalyses the reaction guanosine(46) in tRNA + S-adenosyl-L-methionine = N(7)-methylguanosine(46) in tRNA + S-adenosyl-L-homocysteine. The protein operates within tRNA modification; N(7)-methylguanine-tRNA biosynthesis. Catalyzes the formation of N(7)-methylguanine at position 46 (m7G46) in tRNA. The sequence is that of tRNA (guanine-N(7)-)-methyltransferase from Enterococcus faecalis (strain ATCC 700802 / V583).